Reading from the N-terminus, the 507-residue chain is MVTIRADEISNIIRERIEKYNREVKVVNTGTVLQVGDGIARIHGLDEVMAGELVEFEERTIGIALNLESNNVGVVLMGDGLLIQEGSSVKATGRIAQIPVSDAYLGRVINALAKPIDGRGEISTSESRLIESPAPGIISRRSVYEPLQTGLIAIDSMIPIGRGQRELIIGDRQTGKTAVATDTILNQQGQNVICVYVAIGQKASSVAQVVNMFQERGAMEYTIVVAETADSPATLQYLAPYTGAALAEYFMYRERHTLIIYDDLSKQAQAYRQMSLLLRRPPGREAYPGDVFYLHSRLLERAAKSSSFLGEGSMTALPIVETQSGDVSAYIPTNVISITDGQIFLSADLFNAGIRPAINVGISVSRVGSAAQIKAMKQVAGKLKLELAQFAELEAFAQFASDLDKATQNQLARGQRLRELLKQPQSAPLTVEEQIMTIYTGTNGYLDSLEIGQVRKFIVELRTYLKTNKSQFQEIISSTKTFTEEAEALLKEAIQEQMERFLLQEQA.

170-177 (GDRQTGKT) lines the ATP pocket.

The protein belongs to the ATPase alpha/beta chains family. As to quaternary structure, F-type ATPases have 2 components, CF(1) - the catalytic core - and CF(0) - the membrane proton channel. CF(1) has five subunits: alpha(3), beta(3), gamma(1), delta(1), epsilon(1). CF(0) has four main subunits: a, b, b' and c.

It is found in the plastid. Its subcellular location is the chloroplast thylakoid membrane. The enzyme catalyses ATP + H2O + 4 H(+)(in) = ADP + phosphate + 5 H(+)(out). In terms of biological role, produces ATP from ADP in the presence of a proton gradient across the membrane. The alpha chain is a regulatory subunit. The polypeptide is ATP synthase subunit alpha, chloroplastic (Silene latifolia (White campion)).